A 207-amino-acid chain; its full sequence is Superoxide dismutase [Mn] (207 aa).

4 residues coordinate Mn(2+): His-28, His-76, Asp-160, and His-164.

The protein belongs to the iron/manganese superoxide dismutase family. It depends on Mn(2+) as a cofactor.

It catalyses the reaction 2 superoxide + 2 H(+) = H2O2 + O2. Its function is as follows. Destroys superoxide anion radicals which are normally produced within the cells and which are toxic to biological systems. This Mycobacterium avium protein is Superoxide dismutase [Mn] (sodA).